The following is a 296-amino-acid chain: CCAAT/enhancer-binding protein beta (296 aa).

A required for Lys-133 sumoylation region spans residues Met-1–Met-22. Arg-3 carries the post-translational modification Asymmetric dimethylarginine; by CARM1. The segment at Met-22–Ala-104 is required for MYC transcriptional repression. The residue at position 39 (Lys-39) is an N6-acetyllysine; alternate. Residue Lys-39 is modified to N6-methylated lysine; alternate. N6-acetyllysine; by KAT2A and KAT2B occurs at positions 98 and 101. The residue at position 102 (Lys-102) is an N6-acetyllysine; by KAT2A and KAT2B; alternate. Glycyl lysine isopeptide (Lys-Gly) (interchain with G-Cter in SUMO2); alternate cross-links involve residues Lys-102 and Lys-133. A Glycyl lysine isopeptide (Lys-Gly) (interchain with G-Cter in SUMO); alternate cross-link involves residue Lys-133. Residue Lys-144 forms a Glycyl lysine isopeptide (Lys-Gly) (interchain with G-Cter in SUMO2) linkage. The interval Ser-171 to Ala-199 is disordered. Thr-179 is subject to Phosphothreonine; by GSK3-beta. Ser-180 and Ser-181 each carry an O-linked (GlcNAc) serine glycan. A Phosphoserine; by GSK3-beta modification is found at Ser-184. Thr-188 bears the Phosphothreonine; by RPS6KA1, CDK2 and MAPK mark. Glycyl lysine isopeptide (Lys-Gly) (interchain with G-Cter in SUMO2) cross-links involve residues Lys-211 and Lys-213. Position 217 is a phosphothreonine; by RPS6KA1 and PKC/PRKCA (Thr-217). A bZIP domain is found at Ser-222–Leu-285. The tract at residues Lys-226–Arg-246 is basic motif. Ser-239 is subject to Phosphoserine; by PKC/PRKCA. Residues Leu-248 to Leu-255 are leucine-zipper. The residue at position 276 (Ser-276) is a Phosphoserine; by CaMK2. Lys-283 participates in a covalent cross-link: Glycyl lysine isopeptide (Lys-Gly) (interchain with G-Cter in SUMO2).

It belongs to the bZIP family. C/EBP subfamily. As to quaternary structure, binds DNA as a homodimer and as a heterodimer. Interacts with ATF4. Binds DNA as a heterodimer with ATF4. Interacts with MYB; within the complex, MYB and CEBPB bind to different promoter regions. Can form stable heterodimers with CEBPA, CEBPD and CEBPE. Interacts with SIX1. Isoform 2 and isoform 3 also form heterodimers. Interacts with TRIM28 and PTGES2. Interacts with PRDM16. Interacts with CCDC85B. Forms a complex with THOC5. Interacts with ZNF638; this interaction increases transcriptional activation. Interacts with CIDEA and CIDEC. Interaction with CIDEA increases transcriptional activation of a subset of CEBPB downstream target genes, including ID2, IGF1, PRLR, SOCS1, SOCS3, XDH. Interaction with CIDEC increases transcriptional activation of SOCS1, SOCS3, TGFB1, TGFBR1, ID2 and XDH. Interacts with DDIT3/CHOP. Interacts with EP300; recruits EP300 to chromatin. Interacts with RORA; the interaction disrupts interaction with EP300. Interacts (not methylated) with MED23, MED26, SMARCA2, SMARCB1 and SMARCC1. Interacts with KAT2A and KAT2B. Interacts with ATF5; EP300 is required for ATF5 and CEBPB interaction and DNA binding. Interacts with NFE2L1; the heterodimer represses expression of DSPP during odontoblast differentiation. Sumoylated by polymeric chains of SUMO2 or SUMO3. Sumoylation at Lys-133 is required for inhibition of T-cells proliferation. In adipocytes, sumoylation at Lys-133 by PIAS1 leads to ubiquitination and subsequent proteasomal degradation. Desumoylated by SENP2, which abolishes ubiquitination and stabilizes protein levels. Post-translationally, ubiquitinated, leading to proteasomal degradation. In terms of processing, phosphorylated at Thr-188 by MAPK and CDK2, serves to prime phosphorylation at Thr-179 and Ser-184 by GSK3B and acquire DNA-binding as well as transactivation activities, required to induce adipogenesis. MAPK and CDK2 act sequentially to maintain Thr-188 in the primed phosphorylated state during mitotical cloning expansion and thereby progression of terminal differentiation. Phosphorylation at Thr-217 enhances transactivation activity. Phosphorylation at Ser-276 in response to calcium increases transactivation activity. Phosphorylated at Thr-188 by RPS6KA1. O-glycosylated, glycosylation at Ser-180 and Ser-181 prevents phosphorylation on Thr-188, Ser-184 and Thr-179 and DNA binding activity which delays the adipocyte differentiation program. Post-translationally, acetylated. Acetylation at Lys-39 is an important and dynamic regulatory event that contributes to its ability to transactivate target genes, including those associated with adipogenesis and adipocyte function. Deacetylation by HDAC1 represses its transactivation activity. Acetylated by KAT2A and KAT2B within a cluster of lysine residues between amino acids 98-102, this acetylation is strongly induced by glucocorticoid treatment and enhances transactivation activity. In terms of processing, methylated. Methylation at Arg-3 by CARM1 and at Lys-39 by EHMT2, inhibits transactivation activity. Methylation is probably inhibited by phosphorylation at Thr-188. Abundantly expressed in myoblasts. Enriched in brown adipose tissue (BAT) versus white adipose tissue (WAT). Expressed in hepatocytes (at protein level). Expressed in T lymphocytes. The expression in granulosa cells of antral follicles is induced by luteinizing hormone. Expressed in chondrocytes and osteoblasts (at protein level).

It is found in the nucleus. Its subcellular location is the cytoplasm. Functionally, important transcription factor regulating the expression of genes involved in immune and inflammatory responses. Also plays a significant role in adipogenesis, as well as in the gluconeogenic pathway, liver regeneration, and hematopoiesis. The consensus recognition site is 5'-T[TG]NNGNAA[TG]-3'. Its functional capacity is governed by protein interactions and post-translational protein modifications. During early embryogenesis, plays essential and redundant roles with CEBPA. Has a promitotic effect on many cell types such as hepatocytes and adipocytes but has an antiproliferative effect on T-cells by repressing MYC expression, facilitating differentiation along the T-helper 2 lineage. Binds to regulatory regions of several acute-phase and cytokines genes and plays a role in the regulation of acute-phase reaction and inflammation. Also plays a role in intracellular bacteria killing. During adipogenesis, is rapidly expressed and, after activation by phosphorylation, induces CEBPA and PPARG, which turn on the series of adipocyte genes that give rise to the adipocyte phenotype. The delayed transactivation of the CEBPA and PPARG genes by CEBPB appears necessary to allow mitotic clonal expansion and thereby progression of terminal differentiation. Essential for female reproduction because of a critical role in ovarian follicle development. Restricts osteoclastogenesis. Together with NFE2L1; represses expression of DSPP during odontoblast differentiation. Its function is as follows. Essential for gene expression induction in activated macrophages. Plays a major role in immune responses such as CD4(+) T-cell response, granuloma formation and endotoxin shock. Not essential for intracellular bacteria killing. Acts as a dominant negative through heterodimerization with isoform 2. Promotes osteoblast differentiation and osteoclastogenesis. The chain is CCAAT/enhancer-binding protein beta from Mus musculus (Mouse).